The sequence spans 623 residues: Isocitrate dehydrogenase kinase/phosphatase (623 aa).

Residues 344–350 and Lys-365 each bind ATP; that span reads APGIKGM. Asp-400 is a catalytic residue.

Belongs to the AceK family.

The protein resides in the cytoplasm. The catalysed reaction is L-seryl-[isocitrate dehydrogenase] + ATP = O-phospho-L-seryl-[isocitrate dehydrogenase] + ADP + H(+). Its function is as follows. Bifunctional enzyme which can phosphorylate or dephosphorylate isocitrate dehydrogenase (IDH) on a specific serine residue. This is a regulatory mechanism which enables bacteria to bypass the Krebs cycle via the glyoxylate shunt in response to the source of carbon. When bacteria are grown on glucose, IDH is fully active and unphosphorylated, but when grown on acetate or ethanol, the activity of IDH declines drastically concomitant with its phosphorylation. This is Isocitrate dehydrogenase kinase/phosphatase from Polaromonas naphthalenivorans (strain CJ2).